Reading from the N-terminus, the 157-residue chain is SUMO-conjugating enzyme UBC9-B (157 aa).

Residues 4–157 (IALSRLAQER…VRAQAKKFSP (154 aa)) enclose the UBC core domain. The segment at 13–18 (RKAWRK) is interaction with SUMO1. The Glycyl thioester intermediate role is filled by Cys93.

It belongs to the ubiquitin-conjugating enzyme family. In terms of assembly, forms a tight complex with rangap1 and ranbp2. Interacts with vsx1.

It localises to the nucleus. Its pathway is protein modification; protein sumoylation. In terms of biological role, accepts the ubiquitin-like proteins sumo1, sumo2 and sumo3 from the uble1a-uble1b E1 complex and catalyzes their covalent attachment to other proteins with the help of an E3 ligase such as ranbp2 or cbx4. Essential for nuclear architecture and chromosome segregation. Mediates nuclear localization of vsx1. Required for progression through mitosis during organogenesis. The chain is SUMO-conjugating enzyme UBC9-B (ube2ib) from Danio rerio (Zebrafish).